Here is a 128-residue protein sequence, read N- to C-terminus: MAKDTRTRKKVTRTVSEGVAHIHASFNNTIVTITDRQGNALAWATSGGQGFRGSRKSTPFAAQVAAEVAGKAALDYGLKNLDVLVKGPGPGRESAVRALGAVGYKINSITDVTPIPHNGCRPPKKRRV.

Belongs to the universal ribosomal protein uS11 family. As to quaternary structure, part of the 30S ribosomal subunit. Interacts with proteins S7 and S18. Binds to IF-3.

In terms of biological role, located on the platform of the 30S subunit, it bridges several disparate RNA helices of the 16S rRNA. Forms part of the Shine-Dalgarno cleft in the 70S ribosome. This chain is Small ribosomal subunit protein uS11, found in Acinetobacter baylyi (strain ATCC 33305 / BD413 / ADP1).